The chain runs to 127 residues: DNA-directed RNA polymerase subunit omega (127 aa).

The protein belongs to the RNA polymerase subunit omega family. The RNAP catalytic core consists of 2 alpha, 1 beta, 1 beta' and 1 omega subunit. When a sigma factor is associated with the core the holoenzyme is formed, which can initiate transcription.

The enzyme catalyses RNA(n) + a ribonucleoside 5'-triphosphate = RNA(n+1) + diphosphate. Functionally, promotes RNA polymerase assembly. Latches the N- and C-terminal regions of the beta' subunit thereby facilitating its interaction with the beta and alpha subunits. This is DNA-directed RNA polymerase subunit omega from Rickettsia africae (strain ESF-5).